The primary structure comprises 314 residues: DNA-directed RNA polymerase subunit alpha (314 aa).

Residues Met-1 to Thr-228 form an alpha N-terminal domain (alpha-NTD) region. The alpha C-terminal domain (alpha-CTD) stretch occupies residues Glu-246–Asp-314.

Belongs to the RNA polymerase alpha chain family. As to quaternary structure, homodimer. The RNAP catalytic core consists of 2 alpha, 1 beta, 1 beta' and 1 omega subunit. When a sigma factor is associated with the core the holoenzyme is formed, which can initiate transcription.

The enzyme catalyses RNA(n) + a ribonucleoside 5'-triphosphate = RNA(n+1) + diphosphate. Functionally, DNA-dependent RNA polymerase catalyzes the transcription of DNA into RNA using the four ribonucleoside triphosphates as substrates. This is DNA-directed RNA polymerase subunit alpha from Bacillus velezensis (strain DSM 23117 / BGSC 10A6 / LMG 26770 / FZB42) (Bacillus amyloliquefaciens subsp. plantarum).